The sequence spans 161 residues: 2-C-methyl-D-erythritol 2,4-cyclodiphosphate synthase (161 aa).

Positions 10 and 12 each coordinate a divalent metal cation. Residues 10–12 (DVH) and 36–37 (HS) each bind 4-CDP-2-C-methyl-D-erythritol 2-phosphate. H44 contacts a divalent metal cation. 4-CDP-2-C-methyl-D-erythritol 2-phosphate is bound by residues 58-60 (DIG), 63-67 (FPDTD), 102-108 (AQAPKMA), 134-137 (TTTE), F141, and R144.

The protein belongs to the IspF family. In terms of assembly, homotrimer. It depends on a divalent metal cation as a cofactor.

It catalyses the reaction 4-CDP-2-C-methyl-D-erythritol 2-phosphate = 2-C-methyl-D-erythritol 2,4-cyclic diphosphate + CMP. Its pathway is isoprenoid biosynthesis; isopentenyl diphosphate biosynthesis via DXP pathway; isopentenyl diphosphate from 1-deoxy-D-xylulose 5-phosphate: step 4/6. In terms of biological role, involved in the biosynthesis of isopentenyl diphosphate (IPP) and dimethylallyl diphosphate (DMAPP), two major building blocks of isoprenoid compounds. Catalyzes the conversion of 4-diphosphocytidyl-2-C-methyl-D-erythritol 2-phosphate (CDP-ME2P) to 2-C-methyl-D-erythritol 2,4-cyclodiphosphate (ME-CPP) with a corresponding release of cytidine 5-monophosphate (CMP). The chain is 2-C-methyl-D-erythritol 2,4-cyclodiphosphate synthase from Shewanella baltica (strain OS155 / ATCC BAA-1091).